The chain runs to 432 residues: MTELQQDVEDTKPAKVLGKRESKLGSAHSEAENGVEEKKKACRSPTAQSPTPSVEADSPDQKKIISLWSKSSFDGASLASDKNDCKTESKNDPKTERKKSSSSSQYKANMHFHKLFLSVPTEEPLKQSFTCALQKEILYQGKLFVSENWICFHSKVFGKDTKISIPAFSVTLIKKTKTALLVPNALIIATVTDRYIFVSLLSRDSTYKLLKSVCGHLENTSVGNSPNPSSAENSFRADRPSSLPLDFNDEFSDLDGVVQQRRQDMEGYSSSGSQTPESENSRDFHATESQTVLNVSKGEAKPTRADAHVNRVPEGKAKSLPVQGLSETVGILHKVKSQKCPMLHHILIFYAIVVCALIISTFYMRYRINTLEEQLGLLTSIVDTHNTEQAAPSGLRSQVQFNVEVLCQELTANIVKLEKIQNNLQKLLENGD.

Met1 is subject to N-acetylmethionine. Disordered stretches follow at residues 1–61 and 74–106; these read MTEL…SPDQ and DGAS…SSQY. Basic and acidic residues-rich tracts occupy residues 9–39 and 81–99; these read EDTK…EEKK and DKND…ERKK. The GRAM domain occupies 110-177; it reads MHFHKLFLSV…FSVTLIKKTK (68 aa). The segment covering 220–233 has biased composition (polar residues); sequence TSVGNSPNPSSAEN. A disordered region spans residues 220-239; that stretch reads TSVGNSPNPSSAENSFRADR. Phosphoserine occurs at positions 225, 242, and 252. A disordered region spans residues 262–285; sequence RQDMEGYSSSGSQTPESENSRDFH. A compositionally biased stretch (polar residues) spans 268–278; that stretch reads YSSSGSQTPES.

The polypeptide is GRAM domain-containing protein 2B (GRAMD2B) (Homo sapiens (Human)).